The sequence spans 260 residues: Flap endonuclease Xni (260 aa).

Mg(2+) is bound at residue Asp109. The region spanning 165 to 259 is the 5'-3' exonuclease domain; the sequence is VKPSQLADYW…DIRFTGPNKA (95 aa). Leu176, Pro185, Val187, and Ile190 together coordinate K(+). The interaction with DNA stretch occupies residues 189-194; that stretch reads GIGPKA.

This sequence belongs to the Xni family. The cofactor is Mg(2+). K(+) serves as cofactor.

Has flap endonuclease activity. During DNA replication, flap endonucleases cleave the 5'-overhanging flap structure that is generated by displacement synthesis when DNA polymerase encounters the 5'-end of a downstream Okazaki fragment. This chain is Flap endonuclease Xni, found in Vibrio parahaemolyticus serotype O3:K6 (strain RIMD 2210633).